The sequence spans 572 residues: Hemagglutinin-neuraminidase (572 aa).

Topologically, residues 1 to 31 are intravirion; the sequence is MEYWKHTNHGKDAGNELETSMATHGNKITNK. A helical transmembrane segment spans residues 32–52; it reads ITYILWTIILVLLSIVFIIVL. The Virion surface portion of the chain corresponds to 53–572; sequence INSIKSEKAH…FKTEIPKSCS (520 aa). 2 disulfide bridges follow: Cys190-Cys214 and Cys256-Cys269. The tract at residues 252-257 is involved in neuraminidase activity; sequence NRKSCS. N-linked (GlcNAc...) asparagine; by host glycans are attached at residues Asn308 and Asn351. 2 disulfide bridges follow: Cys355–Cys469 and Cys463–Cys473. The N-linked (GlcNAc...) asparagine; by host glycan is linked to Asn523. A disulfide bridge links Cys535 with Cys544.

It belongs to the paramyxoviruses hemagglutinin-neuraminidase family. As to quaternary structure, homotetramer; composed of disulfide-linked homodimers. Interacts with F protein trimer.

The protein localises to the virion membrane. It localises to the host cell membrane. The enzyme catalyses Hydrolysis of alpha-(2-&gt;3)-, alpha-(2-&gt;6)-, alpha-(2-&gt;8)- glycosidic linkages of terminal sialic acid residues in oligosaccharides, glycoproteins, glycolipids, colominic acid and synthetic substrates.. Functionally, attaches the virus to sialic acid-containing cell receptors and thereby initiating infection. Binding of HN protein to the receptor induces a conformational change that allows the F protein to trigger virion/cell membranes fusion. Its function is as follows. Neuraminidase activity ensures the efficient spread of the virus by dissociating the mature virions from the neuraminic acid containing glycoproteins. The protein is Hemagglutinin-neuraminidase (HN) of Human parainfluenza 3 virus (strain Wash/47885/57) (HPIV-3).